A 362-amino-acid chain; its full sequence is Flagellar P-ring protein (362 aa).

Positions 1–15 are cleaved as a signal peptide; sequence MLAAALMSAAFGAHA.

It belongs to the FlgI family. The basal body constitutes a major portion of the flagellar organelle and consists of four rings (L,P,S, and M) mounted on a central rod.

The protein localises to the periplasm. Its subcellular location is the bacterial flagellum basal body. In terms of biological role, assembles around the rod to form the L-ring and probably protects the motor/basal body from shearing forces during rotation. This chain is Flagellar P-ring protein, found in Pseudomonas fluorescens (strain Pf0-1).